An 873-amino-acid chain; its full sequence is MKSSEIRQKFLQFFQSKGHSIVPSSSLVPGNDPTLLFTNSGMVQFKDVFTGKEKRPYTRATSSQRSVRAGGKHNDLENVGYTARHHTFFEMLGNFSFGDYFKQDAIRFAWELLTTVYKLPVEKLWVTVYQEDDEAYDIWAKEVGVPTERIIRIGDNKGARYASDNFWQMGDTGPCGPCTEIFYDHGPDIWGGPPGSPEEDGDRYIEIWNLVFMQFERDAAGNMTPLPKPCVDTGMGLERIAAVLQGVHSNYEIDLFQKLITAAARETGVQDLHDNSLKVIADHIRACSFLIVDGVIPSNEGRGYVLRRIVRRALRHGYKLGQTKPFFYRLVPDLVAQMGEAYPELANMAERVGQVLKQEEERFGETLEHGMKILDVALAQVPKGGLLDGNTLFTLYDTYGFPVDLTADICREREVEIDMAGFEAAMERQRDQARAAGKFKMAEGLNYEGAQTRFEGYEQLELSGAKVTALYVDGTQTDQVRAGQQAVVVLDATPFYAESGGQVGDTGLLVADGLRFAVADTLKVQAGVFGHHGLLEEGVLKVGDTLLARVDAVRRARTVRNHSATHLMHKALREVLGAHVQQRGSLVDPDKTRFDFAHDAPMTAEQIARVEAIVNAEVLANQAAQARVMAYDDAVKGGAMALFGEKYGDTVRVLDIGFSRELCGGTHVSRTGDIGLFKIVSEGGVAAGVRRVEAITGDNALVWVQEQNALLQRAAGVLRSPVAELPERIAQVQDQVKALEKDLEQARAKLAASAGNDLADKSAVEIKGVKVLAAVINDVDPKALRGMVDNLKDKLKPAIVLLAASADGKISLVGGVTADQTAKVKAGDLVGFVAAQVGGKGGGRPDMAMGGGTDVAALPAAIASVQDWVNERL.

Positions 562, 566, 663, and 667 each coordinate Zn(2+).

This sequence belongs to the class-II aminoacyl-tRNA synthetase family. Requires Zn(2+) as cofactor.

The protein localises to the cytoplasm. It carries out the reaction tRNA(Ala) + L-alanine + ATP = L-alanyl-tRNA(Ala) + AMP + diphosphate. In terms of biological role, catalyzes the attachment of alanine to tRNA(Ala) in a two-step reaction: alanine is first activated by ATP to form Ala-AMP and then transferred to the acceptor end of tRNA(Ala). Also edits incorrectly charged Ser-tRNA(Ala) and Gly-tRNA(Ala) via its editing domain. The chain is Alanine--tRNA ligase from Bordetella avium (strain 197N).